A 238-amino-acid polypeptide reads, in one-letter code: Accessory gene regulator A (238 aa).

The region spanning 2-125 (KIFICEDDPK…LRTRIIDCLE (124 aa)) is the Response regulatory domain. The residue at position 59 (Asp-59) is a 4-aspartylphosphate. In terms of domain architecture, HTH LytTR-type spans 143–238 (IELKRGSNSV…YASVRNVKKK (96 aa)).

It localises to the cytoplasm. Functionally, required for high-level post-exponential phase expression of a series of secreted proteins. This Staphylococcus aureus (strain Mu50 / ATCC 700699) protein is Accessory gene regulator A (agrA).